The sequence spans 273 residues: Formamidopyrimidine-DNA glycosylase (273 aa).

The Schiff-base intermediate with DNA role is filled by Pro-2. The Proton donor role is filled by Glu-3. The active-site Proton donor; for beta-elimination activity is Lys-58. DNA-binding residues include His-91, Arg-110, and Arg-153. The segment at 238-272 adopts an FPG-type zinc-finger fold; sequence KVYGKEGQPCPRCGEDFVKIKICGRGTTYCLHCQK. Arg-262 serves as the catalytic Proton donor; for delta-elimination activity.

This sequence belongs to the FPG family. As to quaternary structure, monomer. The cofactor is Zn(2+).

The catalysed reaction is Hydrolysis of DNA containing ring-opened 7-methylguanine residues, releasing 2,6-diamino-4-hydroxy-5-(N-methyl)formamidopyrimidine.. It carries out the reaction 2'-deoxyribonucleotide-(2'-deoxyribose 5'-phosphate)-2'-deoxyribonucleotide-DNA = a 3'-end 2'-deoxyribonucleotide-(2,3-dehydro-2,3-deoxyribose 5'-phosphate)-DNA + a 5'-end 5'-phospho-2'-deoxyribonucleoside-DNA + H(+). Functionally, involved in base excision repair of DNA damaged by oxidation or by mutagenic agents. Acts as a DNA glycosylase that recognizes and removes damaged bases. Has a preference for oxidized purines, such as 7,8-dihydro-8-oxoguanine (8-oxoG). Has AP (apurinic/apyrimidinic) lyase activity and introduces nicks in the DNA strand. Cleaves the DNA backbone by beta-delta elimination to generate a single-strand break at the site of the removed base with both 3'- and 5'-phosphates. In Lactobacillus delbrueckii subsp. bulgaricus (strain ATCC BAA-365 / Lb-18), this protein is Formamidopyrimidine-DNA glycosylase.